A 223-amino-acid chain; its full sequence is Phosphoglycolate phosphatase (223 aa).

Asp-10 serves as the catalytic Nucleophile. Mg(2+) contacts are provided by Asp-10 and Asp-12. Lys-149 provides a ligand contact to substrate. Residues Asp-172 and Asp-176 each contribute to the Mg(2+) site.

It belongs to the archaeal SPP-like hydrolase family. Mg(2+) is required as a cofactor.

The catalysed reaction is 2-phosphoglycolate + H2O = glycolate + phosphate. Its function is as follows. Catalyzes the dephosphorylation of 2-phosphoglycolate. This Archaeoglobus fulgidus (strain ATCC 49558 / DSM 4304 / JCM 9628 / NBRC 100126 / VC-16) protein is Phosphoglycolate phosphatase.